Consider the following 119-residue polypeptide: Ribonuclease P protein component (119 aa).

Belongs to the RnpA family. Consists of a catalytic RNA component (M1 or rnpB) and a protein subunit.

The catalysed reaction is Endonucleolytic cleavage of RNA, removing 5'-extranucleotides from tRNA precursor.. Functionally, RNaseP catalyzes the removal of the 5'-leader sequence from pre-tRNA to produce the mature 5'-terminus. It can also cleave other RNA substrates such as 4.5S RNA. The protein component plays an auxiliary but essential role in vivo by binding to the 5'-leader sequence and broadening the substrate specificity of the ribozyme. The sequence is that of Ribonuclease P protein component from Cronobacter sakazakii (strain ATCC BAA-894) (Enterobacter sakazakii).